Here is a 323-residue protein sequence, read N- to C-terminus: Fructose-1,6-bisphosphatase class 1 (323 aa).

Mg(2+)-binding residues include Glu-84, Asp-103, Leu-105, and Asp-106. Substrate is bound by residues 106–109, Asn-198, and Lys-264; that span reads DGSS. Glu-270 is a binding site for Mg(2+).

This sequence belongs to the FBPase class 1 family. Homotetramer. Mg(2+) is required as a cofactor.

The protein localises to the cytoplasm. The catalysed reaction is beta-D-fructose 1,6-bisphosphate + H2O = beta-D-fructose 6-phosphate + phosphate. It functions in the pathway carbohydrate biosynthesis; gluconeogenesis. This chain is Fructose-1,6-bisphosphatase class 1, found in Cellvibrio japonicus (strain Ueda107) (Pseudomonas fluorescens subsp. cellulosa).